A 489-amino-acid chain; its full sequence is Glutamyl-tRNA(Gln) amidotransferase subunit A (489 aa).

Active-site charge relay system residues include lysine 78 and serine 153. The active-site Acyl-ester intermediate is the serine 177.

Belongs to the amidase family. GatA subfamily. As to quaternary structure, heterotrimer of A, B and C subunits.

It carries out the reaction L-glutamyl-tRNA(Gln) + L-glutamine + ATP + H2O = L-glutaminyl-tRNA(Gln) + L-glutamate + ADP + phosphate + H(+). Allows the formation of correctly charged Gln-tRNA(Gln) through the transamidation of misacylated Glu-tRNA(Gln) in organisms which lack glutaminyl-tRNA synthetase. The reaction takes place in the presence of glutamine and ATP through an activated gamma-phospho-Glu-tRNA(Gln). This is Glutamyl-tRNA(Gln) amidotransferase subunit A from Enterococcus faecalis (strain ATCC 700802 / V583).